The sequence spans 928 residues: Probable outer membrane protein pmp11 (928 aa).

The signal sequence occupies residues 1 to 24; it reads MKTSIPWVLVSSVLAFSCHLQSLA. In terms of domain architecture, Autotransporter spans 627-928; it reads GMEHKQGFWV…NVDVGTKLRF (302 aa).

Belongs to the PMP outer membrane protein family.

The protein localises to the secreted. The protein resides in the cell wall. It localises to the cell outer membrane. The sequence is that of Probable outer membrane protein pmp11 (pmp11) from Chlamydia pneumoniae (Chlamydophila pneumoniae).